The sequence spans 146 residues: Hemoglobin cathodic subunit beta (146 aa).

One can recognise a Globin domain in the interval 2–146; that stretch reads QWSSSERSVI…VVSGLSKQYF (145 aa). H63 lines the heme b pocket.

In terms of assembly, heterotetramer of two alpha and two beta chains. Red blood cells.

Functionally, involved in oxygen transport from the gills to various peripheral tissues. This is Hemoglobin cathodic subunit beta from Ophisurus serpens (Serpent eel).